A 193-amino-acid chain; its full sequence is MKIGLYFGTYNPIHVGHLIIANHMAEFADLDQIWMVVTPHNPLKKKSTLLDDQQRLQMVYLATEDYTKIKPSDIEFKLPQPSYTVITLEHLKEKYPNHEFSLIMGEDNLKTLHKWRNYEVILENHDIYVYPRISDEPENVELKSHPKIHVIDAPIVEISSTFIRNSIKEGKNIQPLLPPKVWEYIDHNNFYKK.

It belongs to the NadD family.

The enzyme catalyses nicotinate beta-D-ribonucleotide + ATP + H(+) = deamido-NAD(+) + diphosphate. Its pathway is cofactor biosynthesis; NAD(+) biosynthesis; deamido-NAD(+) from nicotinate D-ribonucleotide: step 1/1. Its function is as follows. Catalyzes the reversible adenylation of nicotinate mononucleotide (NaMN) to nicotinic acid adenine dinucleotide (NaAD). The polypeptide is Probable nicotinate-nucleotide adenylyltransferase (Flavobacterium johnsoniae (strain ATCC 17061 / DSM 2064 / JCM 8514 / BCRC 14874 / CCUG 350202 / NBRC 14942 / NCIMB 11054 / UW101) (Cytophaga johnsonae)).